A 483-amino-acid chain; its full sequence is MGNEVRVRYAPSPTGHLHIGNARTALFNYLFARNQGGKFIIRVEDTDKKRNIEGGEQSQLNYLKWLGIDWDESVDVGGEYGPYRQSERNDIYKVYYEELLEKGLAYKCYCTEEELEKEREEQIARGEMPRYSGKHRDLTQEEQEKFIAEGRKPSIRFRVPEGKVIAFNDIVKGEISFESDGIGDFVIVKKDGTPTYNFAVAIDDYLMKMTHVLRGEDHISNTPKQIMIYQAFGWDIPQFGHMTLIVNESRKKLSKRDESIIQFIEQYKELGYLPEALFNFIGLLGWSPVGEEELFTKEQFIEIFDVNRLSKSPALFDMHKLKWVNNQYVKKLDLDQVVELTLPHLQKAGKVGTELSAEEQEWVRKLISLYHEQLSYGAEIVELTDLFFTDEIEYNQEAKAVLEEEQVPEVLSTFAAKLEELEEFTPDNIKASIKAVQKETGHKGKKLFMPIRVAVTGQTHGPELPQSIELIGKETAIQRLKNI.

The short motif at Pro11–Asn21 is the 'HIGH' region element. 4 residues coordinate Zn(2+): Cys108, Cys110, His135, and Asp137. The short motif at Lys252–Arg256 is the 'KMSKS' region element. Lys255 provides a ligand contact to ATP.

This sequence belongs to the class-I aminoacyl-tRNA synthetase family. Glutamate--tRNA ligase type 1 subfamily. As to quaternary structure, monomer. Requires Zn(2+) as cofactor.

It is found in the cytoplasm. The catalysed reaction is tRNA(Glu) + L-glutamate + ATP = L-glutamyl-tRNA(Glu) + AMP + diphosphate. Catalyzes the attachment of glutamate to tRNA(Glu) in a two-step reaction: glutamate is first activated by ATP to form Glu-AMP and then transferred to the acceptor end of tRNA(Glu). The protein is Glutamate--tRNA ligase of Bacillus subtilis (strain 168).